We begin with the raw amino-acid sequence, 453 residues long: UDP-glycosyltransferase 76E1 (453 aa).

Residues S272, 331–333 (APQ), 348–356 (HCGWNSTLE), and 370–373 (TGDQ) contribute to the UDP-alpha-D-glucose site.

Belongs to the UDP-glycosyltransferase family.

Functionally, possesses low quercetin 3-O-glucosyltransferase and 7-O-glucosyltransferase activities in vitro. The sequence is that of UDP-glycosyltransferase 76E1 (UGT76E1) from Arabidopsis thaliana (Mouse-ear cress).